A 302-amino-acid chain; its full sequence is Methionyl-tRNA formyltransferase (302 aa).

Position 108–111 (108–111 (SLLP)) interacts with (6S)-5,6,7,8-tetrahydrofolate. Over residues 279–288 (KRPMEPEEFL) the composition is skewed to basic and acidic residues. A disordered region spans residues 279 to 302 (KRPMEPEEFLRGFPLPEGSRAHTS).

This sequence belongs to the Fmt family.

The enzyme catalyses L-methionyl-tRNA(fMet) + (6R)-10-formyltetrahydrofolate = N-formyl-L-methionyl-tRNA(fMet) + (6S)-5,6,7,8-tetrahydrofolate + H(+). In terms of biological role, attaches a formyl group to the free amino group of methionyl-tRNA(fMet). The formyl group appears to play a dual role in the initiator identity of N-formylmethionyl-tRNA by promoting its recognition by IF2 and preventing the misappropriation of this tRNA by the elongation apparatus. The protein is Methionyl-tRNA formyltransferase of Cereibacter sphaeroides (strain ATCC 17023 / DSM 158 / JCM 6121 / CCUG 31486 / LMG 2827 / NBRC 12203 / NCIMB 8253 / ATH 2.4.1.) (Rhodobacter sphaeroides).